The sequence spans 178 residues: CCHC-type zinc finger nucleic acid binding protein (178 aa).

Serine 2 is subject to N-acetylserine. The CCHC-type 1 zinc finger occupies 4–21 (NECFKCGRSGHWARECPT). The residue at position 8 (lysine 8) is an N6-acetyllysine. An omega-N-methylarginine; by PRMT1 mark is found at arginine 25 and arginine 27. The interval 25–38 (RGRGMRSRGRGGFT) is RNA-binding Arg/Gly-rich region (RGG-box). Residues arginine 32 and arginine 34 each carry the omega-N-methylarginine modification. Serine 49 carries the post-translational modification Phosphoserine. 6 CCHC-type zinc fingers span residues 52–69 (DICYRCGESGHLAKDCDL), 72–90 (DEACYNCGRGGHIAKDCKE), 97–114 (QCCYNCGKPGHLARDCDH), 118–135 (QKCYSCGEFGHIQKDCTK), 136–153 (VKCYRCGETGHVAINCSK), and 157–174 (VNCYRCGESGHLARECTI). 3 positions are modified to omega-N-methylarginine: aspartate 72, glycine 79, and arginine 80.

As to quaternary structure, associates with the 40S ribosomal subunit, the 80S ribosome and with polysomes. In terms of processing, arginine methylation by PRMT1 in the Arg/Gly-rich region impedes RNA binding.

The protein localises to the nucleus. The protein resides in the cytoplasm. Its subcellular location is the endoplasmic reticulum. Its function is as follows. Single-stranded DNA-binding protein that preferentially binds to the sterol regulatory element (SRE) sequence 5'-GTGCGGTG-3', and thereby mediates transcriptional repression. Has a role as transactivator of the Myc promoter. Binds single-stranded RNA in a sequence-specific manner. Binds G-rich elements in target mRNA coding sequences. Prevents G-quadruplex structure formation in vitro, suggesting a role in supporting translation by resolving stable structures on mRNAs. This chain is CCHC-type zinc finger nucleic acid binding protein, found in Mus musculus (Mouse).